Here is a 207-residue protein sequence, read N- to C-terminus: Urease accessory protein UreG (207 aa).

Residue Gly16–Thr23 participates in GTP binding.

This sequence belongs to the SIMIBI class G3E GTPase family. UreG subfamily. Homodimer. UreD, UreF and UreG form a complex that acts as a GTP-hydrolysis-dependent molecular chaperone, activating the urease apoprotein by helping to assemble the nickel containing metallocenter of UreC. The UreE protein probably delivers the nickel.

The protein resides in the cytoplasm. Facilitates the functional incorporation of the urease nickel metallocenter. This process requires GTP hydrolysis, probably effectuated by UreG. The chain is Urease accessory protein UreG from Blochmanniella pennsylvanica (strain BPEN).